We begin with the raw amino-acid sequence, 192 residues long: BON1-associated protein 1 (192 aa).

The C2 domain maps to 1–119 (MIYFGRSIDN…RYSPEGHLNF (119 aa)).

Interacts with BON1 (via VWA domain), BON2 and BON3. As to expression, expressed in roots, leaves, stems and flowers.

It localises to the membrane. Negative regulator of cell death and defense responses. Exhibits calcium-dependent phospholipid binding properties. The polypeptide is BON1-associated protein 1 (BAP1) (Arabidopsis thaliana (Mouse-ear cress)).